The sequence spans 417 residues: Serine hydroxymethyltransferase (417 aa).

Residues Leu121 and Gly125–Leu127 contribute to the (6S)-5,6,7,8-tetrahydrofolate site. Lys229 is subject to N6-(pyridoxal phosphate)lysine. Ser355–Phe357 lines the (6S)-5,6,7,8-tetrahydrofolate pocket.

Belongs to the SHMT family. In terms of assembly, homodimer. Requires pyridoxal 5'-phosphate as cofactor.

The protein localises to the cytoplasm. The catalysed reaction is (6R)-5,10-methylene-5,6,7,8-tetrahydrofolate + glycine + H2O = (6S)-5,6,7,8-tetrahydrofolate + L-serine. It functions in the pathway one-carbon metabolism; tetrahydrofolate interconversion. It participates in amino-acid biosynthesis; glycine biosynthesis; glycine from L-serine: step 1/1. Catalyzes the reversible interconversion of serine and glycine with tetrahydrofolate (THF) serving as the one-carbon carrier. This reaction serves as the major source of one-carbon groups required for the biosynthesis of purines, thymidylate, methionine, and other important biomolecules. Also exhibits THF-independent aldolase activity toward beta-hydroxyamino acids, producing glycine and aldehydes, via a retro-aldol mechanism. This is Serine hydroxymethyltransferase from Shewanella denitrificans (strain OS217 / ATCC BAA-1090 / DSM 15013).